We begin with the raw amino-acid sequence, 64 residues long: uncharacterized protein (64 aa).

The protein resides in the host cytoplasm. This is an uncharacterized protein from Enterobacteriaceae (Bacteriophage Mu).